The chain runs to 162 residues: Beta-carotene hydroxylase (162 aa).

The region spanning 8-135 is the Fatty acid hydroxylase domain; that stretch reads VATVLVMELT…GRDHCVSFGF (128 aa).

This sequence belongs to the sterol desaturase family.

The catalysed reaction is all-trans-beta-carotene + 4 reduced [2Fe-2S]-[ferredoxin] + 2 O2 + 4 H(+) = all-trans-zeaxanthin + 4 oxidized [2Fe-2S]-[ferredoxin] + 2 H2O. The protein operates within carotenoid biosynthesis; astaxanthin biosynthesis. Functionally, catalyzes the hydroxylation reaction from beta-carotene to zeaxanthin via beta-cryptoxanthin. The polypeptide is Beta-carotene hydroxylase (crtZ) (Paracoccus sp. (strain PC1) (Alcaligenes sp. (strain PC1))).